Consider the following 104-residue polypeptide: Large ribosomal subunit protein uL24 (104 aa).

Belongs to the universal ribosomal protein uL24 family. In terms of assembly, part of the 50S ribosomal subunit.

One of two assembly initiator proteins, it binds directly to the 5'-end of the 23S rRNA, where it nucleates assembly of the 50S subunit. Its function is as follows. One of the proteins that surrounds the polypeptide exit tunnel on the outside of the subunit. This chain is Large ribosomal subunit protein uL24, found in Shewanella denitrificans (strain OS217 / ATCC BAA-1090 / DSM 15013).